The following is a 370-amino-acid chain: Cytoplasmic dynein intermediate light chain DYN3 (370 aa).

It belongs to the dynein light intermediate chain DYN3 family. As to quaternary structure, the cytoplasmic dynein is composed of at least two heavy chains and a number of intermediate and light chains.

It is found in the cytoplasm. It localises to the cytoskeleton. Functionally, component of the cytoplasmic dynein which acts as a motor for the intracellular retrograde motility of vesicles and organelles along microtubules. May play an important role in the proper orientation of the mitotic spindle into the budding daughter cell yeast. Probably required for normal progression of the cell cycle. This is Cytoplasmic dynein intermediate light chain DYN3 (DYN3) from Kluyveromyces lactis (strain ATCC 8585 / CBS 2359 / DSM 70799 / NBRC 1267 / NRRL Y-1140 / WM37) (Yeast).